The sequence spans 295 residues: Regucalcin (295 aa).

Glu-18 is a binding site for a divalent metal cation. Substrate-binding residues include Arg-100, Asn-102, and Asp-120. Residues Asn-150 and Asp-200 each contribute to the a divalent metal cation site. The active-site Proton donor/acceptor is Asp-200.

Belongs to the SMP-30/CGR1 family. Zn(2+) serves as cofactor. Requires Mn(2+) as cofactor. Ca(2+) is required as a cofactor. It depends on Mg(2+) as a cofactor.

Its subcellular location is the cytoplasm. The enzyme catalyses D-glucono-1,5-lactone + H2O = D-gluconate + H(+). Its pathway is cofactor biosynthesis; L-ascorbate biosynthesis via UDP-alpha-D-glucuronate pathway; L-ascorbate from UDP-alpha-D-glucuronate: step 3/4. Gluconolactonase with low activity towards other sugar lactones, including gulonolactone and galactonolactone. Catalyzes a key step in ascorbic acid (vitamin C) biosynthesis. Can also hydrolyze diisopropyl phosphorofluoridate and phenylacetate (in vitro). Calcium-binding protein. Modulates Ca(2+) signaling, and Ca(2+)-dependent cellular processes and enzyme activities. The chain is Regucalcin from Danio rerio (Zebrafish).